A 204-amino-acid polypeptide reads, in one-letter code: Peptide deformylase (204 aa).

Residues Cys131 and His174 each contribute to the Fe cation site. Glu175 is an active-site residue. His178 serves as a coordination point for Fe cation.

The protein belongs to the polypeptide deformylase family. It depends on Fe(2+) as a cofactor.

The enzyme catalyses N-terminal N-formyl-L-methionyl-[peptide] + H2O = N-terminal L-methionyl-[peptide] + formate. Functionally, removes the formyl group from the N-terminal Met of newly synthesized proteins. Requires at least a dipeptide for an efficient rate of reaction. N-terminal L-methionine is a prerequisite for activity but the enzyme has broad specificity at other positions. The polypeptide is Peptide deformylase (Streptococcus equi subsp. zooepidemicus (strain H70)).